A 221-amino-acid chain; its full sequence is H-2 class II histocompatibility antigen, A-Q alpha chain (221 aa).

The segment at 1 to 76 is alpha-1; sequence GIVVYQSPGD…KRSNFTPATN (76 aa). The Extracellular segment spans residues 1–183; the sequence is GIVVYQSPGD…IPAPMSELTE (183 aa). Residues 77–170 are alpha-2; that stretch reads EAPQATVFPK…GLDEPVLKHW (94 aa). The 93-residue stretch at 79–171 folds into the Ig-like C1-type domain; sequence PQATVFPKSP…LDEPVLKHWE (93 aa). An intrachain disulfide couples Cys99 to Cys155. Asn110 carries N-linked (GlcNAc...) asparagine glycosylation. Residues 171–183 form a connecting peptide region; sequence EPEIPAPMSELTE. Residues 184–209 form a helical membrane-spanning segment; that stretch reads TVVCALGLSVGLVGIVVGTIFIIQGL. Over 210–221 the chain is Cytoplasmic; it reads RSGGTSRPPGPL.

The protein belongs to the MHC class II family.

It is found in the membrane. In Mus musculus (Mouse), this protein is H-2 class II histocompatibility antigen, A-Q alpha chain (H2-Aa).